Reading from the N-terminus, the 876-residue chain is Valine--tRNA ligase (876 aa).

A 'HIGH' region motif is present at residues 44 to 54 (PNVTGKLHLGH). The 'KMSKS' region motif lies at 520-524 (KMSKS). Position 523 (Lys-523) interacts with ATP. Residues 806 to 876 (EGLIDMDKEI…VKLRINQLKA (71 aa)) adopt a coiled-coil conformation.

Belongs to the class-I aminoacyl-tRNA synthetase family. ValS type 1 subfamily. As to quaternary structure, monomer.

It is found in the cytoplasm. It catalyses the reaction tRNA(Val) + L-valine + ATP = L-valyl-tRNA(Val) + AMP + diphosphate. Its function is as follows. Catalyzes the attachment of valine to tRNA(Val). As ValRS can inadvertently accommodate and process structurally similar amino acids such as threonine, to avoid such errors, it has a 'posttransfer' editing activity that hydrolyzes mischarged Thr-tRNA(Val) in a tRNA-dependent manner. The protein is Valine--tRNA ligase of Staphylococcus saprophyticus subsp. saprophyticus (strain ATCC 15305 / DSM 20229 / NCIMB 8711 / NCTC 7292 / S-41).